The following is an 865-amino-acid chain: Alanine--tRNA ligase (865 aa).

Residues His-554, His-558, Cys-656, and His-660 each contribute to the Zn(2+) site.

It belongs to the class-II aminoacyl-tRNA synthetase family. Zn(2+) serves as cofactor.

The protein localises to the cytoplasm. It catalyses the reaction tRNA(Ala) + L-alanine + ATP = L-alanyl-tRNA(Ala) + AMP + diphosphate. Its function is as follows. Catalyzes the attachment of alanine to tRNA(Ala) in a two-step reaction: alanine is first activated by ATP to form Ala-AMP and then transferred to the acceptor end of tRNA(Ala). Also edits incorrectly charged Ser-tRNA(Ala) and Gly-tRNA(Ala) via its editing domain. The protein is Alanine--tRNA ligase of Francisella philomiragia subsp. philomiragia (strain ATCC 25017 / CCUG 19701 / FSC 153 / O#319-036).